The following is a 173-amino-acid chain: Shikimate kinase (173 aa).

Position 14 to 19 (14 to 19 (GAGKST)) interacts with ATP. Ser18 contributes to the Mg(2+) binding site. The substrate site is built by Asp36, Arg60, and Gly82. ATP is bound at residue Arg120. Arg140 lines the substrate pocket. Gln157 is a binding site for ATP.

It belongs to the shikimate kinase family. As to quaternary structure, monomer. Requires Mg(2+) as cofactor.

The protein localises to the cytoplasm. It catalyses the reaction shikimate + ATP = 3-phosphoshikimate + ADP + H(+). The protein operates within metabolic intermediate biosynthesis; chorismate biosynthesis; chorismate from D-erythrose 4-phosphate and phosphoenolpyruvate: step 5/7. Catalyzes the specific phosphorylation of the 3-hydroxyl group of shikimic acid using ATP as a cosubstrate. The sequence is that of Shikimate kinase from Baumannia cicadellinicola subsp. Homalodisca coagulata.